Reading from the N-terminus, the 187-residue chain is Cell division protein SepF (187 aa).

It belongs to the SepF family. Homodimer. Interacts with FtsZ.

Its subcellular location is the cytoplasm. Cell division protein that is part of the divisome complex and is recruited early to the Z-ring. Probably stimulates Z-ring formation, perhaps through the cross-linking of FtsZ protofilaments. Its function overlaps with FtsA. The polypeptide is Cell division protein SepF (Streptococcus suis (strain 98HAH33)).